Reading from the N-terminus, the 266-residue chain is tRNA pseudouridine synthase A (266 aa).

Asp53 serves as the catalytic Nucleophile. Tyr109 is a binding site for substrate.

It belongs to the tRNA pseudouridine synthase TruA family.

The catalysed reaction is uridine(38/39/40) in tRNA = pseudouridine(38/39/40) in tRNA. Functionally, formation of pseudouridine at positions 38, 39 and 40 in the anticodon stem and loop of transfer RNAs. This chain is tRNA pseudouridine synthase A, found in Methanocella arvoryzae (strain DSM 22066 / NBRC 105507 / MRE50).